A 625-amino-acid chain; its full sequence is Basic helix-loop-helix ARNT-like protein 1 (625 aa).

The tract at residues 1 to 60 (MADQRMDISSTISDFMSPGPTDLLSSSLGTSGVDCNRKRKGSSTDYQESMDTDKDDPHGR) is disordered. Position 17 is a phosphoserine; by GSK3-beta (Ser-17). Residues 17–32 (SPGPTDLLSSSLGTSG) show a composition bias toward low complexity. Residue Thr-21 is modified to Phosphothreonine; by GSK3-beta. A Nuclear localization signal motif is present at residues 36 to 41 (NRKRKG). Basic and acidic residues predominate over residues 51 to 60 (DTDKDDPHGR). The bHLH domain maps to 72–125 (NAREAHSQIEKRRRDKMNSFIDELASLVPTCNAMSRKLDKLTVLRMAVQHMKTL). At Ser-78 the chain carries Phosphoserine. The residue at position 90 (Ser-90) is a Phosphoserine; by CK2. Positions 142–152 (LSDDELKHLIL) match the Nuclear export signal 1 motif. The PAS 1 domain maps to 143-215 (SDDELKHLIL…EQLSSSDTAP (73 aa)). Lys-252 participates in a covalent cross-link: Glycyl lysine isopeptide (Lys-Gly) (interchain with G-Cter in SUMO2 and SUMO3). Lys-259 is covalently cross-linked (Glycyl lysine isopeptide (Lys-Gly) (interchain with G-Cter in SUMO); alternate). Residue Lys-259 forms a Glycyl lysine isopeptide (Lys-Gly) (interchain with G-Cter in SUMO2); alternate linkage. A PAS 2 domain is found at 325–395 (PQPVNGEIRV…ECHRQVLQTR (71 aa)). Residues 360–368 (LAYLPQELL) carry the Nuclear export signal 2 motif. Residues 400-443 (TNCYKFKIKDGSFITLRSRWFSFMNPWTKEVEYIVSTNTVVLAN) form the PAC domain. Disordered regions lie at residues 454–491 (QLTA…RAGA) and 510–594 (GSSP…SPSN). The interval 507–587 (RIRGSSPSSC…IGIDMIDNDQ (81 aa)) is interaction with CIART. The segment covering 510-520 (GSSPSSCGSSP) has biased composition (low complexity). Lys-537 bears the N6-acetyllysine mark.

As to quaternary structure, component of the circadian clock oscillator which includes the CRY1/2 proteins, CLOCK or NPAS2, BMAL1 or BMAL2, CSNK1D and/or CSNK1E, TIMELESS and the PER1/2/3 proteins. Forms a heterodimer with CLOCK. The CLOCK-BMAL1 heterodimer is required for E-box-dependent transactivation, for CLOCK nuclear translocation and degradation, and, for phosphorylation of both CLOCK and BMAL1. Part of a nuclear complex which also includes RACK1 and PRKCA; RACK1 and PRKCA are recruited to the complex in a circadian manner. Interacts with NPAS2. Interacts with EZH2. Interacts with SUMO3. Interacts with SIRT1. Interacts with AHR. Interacts with ID1, ID2 and ID3. Interacts with DDX4. Interacts with OGT. Interacts with EED and SUZ12. Interacts with MTA1. Interacts with CIART. Interacts with HSP90. Interacts with KAT2B and EP300. Interacts with BHLHE40/DEC1 and BHLHE41/DEC2. Interacts with RELB and the interaction is enhanced in the presence of CLOCK. Interacts with PER1, PER2, CRY1 and CRY2 and this interaction requires a translocation to the nucleus. Interaction of the CLOCK-BMAL1 heterodimer with PER or CRY inhibits transcription activation. Interaction of the CLOCK-BMAL1 with CRY1 is independent of DNA but with PER2 is off DNA. The CLOCK-BMAL1 heterodimer interacts with GSK3B. Interacts with KDM5A. Interacts with KMT2A; in a circadian manner. Interacts with UBE3A. Interacts with PRKCG. Interacts with MAGEL2. Interacts with NCOA2. Interacts with THRAP3. The CLOCK-BMAL1 heterodimer interacts with PASD1. Interacts with PASD1. Interacts with USP9X. Interacts with PIWIL2 (via PIWI domain). Interacts with HDAC3. Interacts with HNF4A. Ubiquitinated, leading to its proteasomal degradation. Deubiquitinated by USP9X. Post-translationally, O-glycosylated; contains O-GlcNAc. O-glycosylation by OGT prevents protein degradation by inhibiting ubiquitination. It also stabilizes the CLOCK-BMAL1 heterodimer thereby increasing CLOCK-BMAL1-mediated transcription of genes in the negative loop of the circadian clock such as PER1/2/3 and CRY1/2. In terms of processing, acetylated on Lys-537 by CLOCK during the repression phase of the circadian cycle. Acetylation facilitates recruitment of CRY1 protein and initiates the repression phase of the circadian cycle. Acetylated at Lys-537 by KAT5 during the activation phase of the cycle, leading to recruitment of the positive transcription elongation factor b (P-TEFb) and BRD4, followed by productive elongation of circadian transcripts. Deacetylated by SIRT1, which may result in decreased protein stability. Phosphorylated upon dimerization with CLOCK. Phosphorylation enhances the transcriptional activity, alters the subcellular localization and decreases the stability of the CLOCK-BMAL1 heterodimer by promoting its degradation. Phosphorylation shows circadian variations in the liver with a peak between CT10 to CT14. Phosphorylation at Ser-90 by CK2 is essential for its nuclear localization, its interaction with CLOCK and controls CLOCK nuclear entry. Dephosphorylation at Ser-78 is important for dimerization with CLOCK and transcriptional activity. Post-translationally, sumoylated on Lys-259 upon dimerization with CLOCK. Predominantly conjugated to poly-SUMO2/3 rather than SUMO1 and the level of these conjugates undergo rhythmic variation, peaking at CT9-CT12. Sumoylation localizes it exclusively to the PML body and promotes its ubiquitination in the PML body, ubiquitin-dependent proteasomal degradation and the transcriptional activity of the CLOCK-BMAL1 heterodimer. In terms of processing, undergoes lysosome-mediated degradation in a time-dependent manner in the liver.

Its subcellular location is the nucleus. It is found in the cytoplasm. It localises to the PML body. Its function is as follows. Transcriptional activator which forms a core component of the circadian clock. The circadian clock, an internal time-keeping system, regulates various physiological processes through the generation of approximately 24 hour circadian rhythms in gene expression, which are translated into rhythms in metabolism and behavior. It is derived from the Latin roots 'circa' (about) and 'diem' (day) and acts as an important regulator of a wide array of physiological functions including metabolism, sleep, body temperature, blood pressure, endocrine, immune, cardiovascular, and renal function. Consists of two major components: the central clock, residing in the suprachiasmatic nucleus (SCN) of the brain, and the peripheral clocks that are present in nearly every tissue and organ system. Both the central and peripheral clocks can be reset by environmental cues, also known as Zeitgebers (German for 'timegivers'). The predominant Zeitgeber for the central clock is light, which is sensed by retina and signals directly to the SCN. The central clock entrains the peripheral clocks through neuronal and hormonal signals, body temperature and feeding-related cues, aligning all clocks with the external light/dark cycle. Circadian rhythms allow an organism to achieve temporal homeostasis with its environment at the molecular level by regulating gene expression to create a peak of protein expression once every 24 hours to control when a particular physiological process is most active with respect to the solar day. Transcription and translation of core clock components (CLOCK, NPAS2, BMAL1, BMAL2, PER1, PER2, PER3, CRY1 and CRY2) plays a critical role in rhythm generation, whereas delays imposed by post-translational modifications (PTMs) are important for determining the period (tau) of the rhythms (tau refers to the period of a rhythm and is the length, in time, of one complete cycle). A diurnal rhythm is synchronized with the day/night cycle, while the ultradian and infradian rhythms have a period shorter and longer than 24 hours, respectively. Disruptions in the circadian rhythms contribute to the pathology of cardiovascular diseases, cancer, metabolic syndromes and aging. A transcription/translation feedback loop (TTFL) forms the core of the molecular circadian clock mechanism. Transcription factors, CLOCK or NPAS2 and BMAL1 or BMAL2, form the positive limb of the feedback loop, act in the form of a heterodimer and activate the transcription of core clock genes and clock-controlled genes (involved in key metabolic processes), harboring E-box elements (5'-CACGTG-3') within their promoters. The core clock genes: PER1/2/3 and CRY1/2 which are transcriptional repressors form the negative limb of the feedback loop and interact with the CLOCK|NPAS2-BMAL1|BMAL2 heterodimer inhibiting its activity and thereby negatively regulating their own expression. This heterodimer also activates nuclear receptors NR1D1/2 and RORA/B/G, which form a second feedback loop and which activate and repress BMAL1 transcription, respectively. BMAL1 positively regulates myogenesis and negatively regulates adipogenesis via the transcriptional control of the genes of the canonical Wnt signaling pathway. Plays a role in normal pancreatic beta-cell function; regulates glucose-stimulated insulin secretion via the regulation of antioxidant genes NFE2L2/NRF2 and its targets SESN2, PRDX3, CCLC and CCLM. Negatively regulates the mTORC1 signaling pathway; regulates the expression of MTOR and DEPTOR. Controls diurnal oscillations of Ly6C inflammatory monocytes; rhythmic recruitment of the PRC2 complex imparts diurnal variation to chemokine expression that is necessary to sustain Ly6C monocyte rhythms. Regulates the expression of HSD3B2, STAR, PTGS2, CYP11A1, CYP19A1 and LHCGR in the ovary and also the genes involved in hair growth. Plays an important role in adult hippocampal neurogenesis by regulating the timely entry of neural stem/progenitor cells (NSPCs) into the cell cycle and the number of cell divisions that take place prior to cell-cycle exit. Regulates the circadian expression of CIART and KLF11. The CLOCK-BMAL1 heterodimer regulates the circadian expression of SERPINE1/PAI1, VWF, B3, CCRN4L/NOC, NAMPT, DBP, MYOD1, PPARGC1A, PPARGC1B, SIRT1, GYS2, F7, NGFR, GNRHR, BHLHE40/DEC1, ATF4, MTA1, KLF10 and also genes implicated in glucose and lipid metabolism. Promotes rhythmic chromatin opening, regulating the DNA accessibility of other transcription factors. The NPAS2-BMAL1 heterodimer positively regulates the expression of MAOA, F7 and LDHA and modulates the circadian rhythm of daytime contrast sensitivity by regulating the rhythmic expression of adenylate cyclase type 1 (ADCY1) in the retina. The preferred binding motif for the CLOCK-BMAL1 heterodimer is 5'-CACGTGA-3', which contains a flanking adenine nucleotide at the 3-prime end of the canonical 6-nucleotide E-box sequence. CLOCK specifically binds to the half-site 5'-CAC-3', while BMAL1 binds to the half-site 5'-GTGA-3'. The CLOCK-BMAL1 heterodimer also recognizes the non-canonical E-box motifs 5'-AACGTGA-3' and 5'-CATGTGA-3'. Essential for the rhythmic interaction of CLOCK with ASS1 and plays a critical role in positively regulating CLOCK-mediated acetylation of ASS1. Plays a role in protecting against lethal sepsis by limiting the expression of immune checkpoint protein CD274 in macrophages in a PKM2-dependent manner. Regulates the diurnal rhythms of skeletal muscle metabolism via transcriptional activation of genes promoting triglyceride synthesis (DGAT2) and metabolic efficiency (COQ10B). The polypeptide is Basic helix-loop-helix ARNT-like protein 1 (BMAL1) (Pongo abelii (Sumatran orangutan)).